A 318-amino-acid chain; its full sequence is Homeobox-leucine zipper protein ATHB-4 (318 aa).

Disordered stretches follow at residues 1–23 (MGER…KEPS) and 128–165 (ARGG…RKKL). A compositionally biased stretch (low complexity) spans 8 to 17 (LGLSLSLGNS). The segment covering 128–140 (ARGGDENEAERAS) has biased composition (basic and acidic residues). The segment at residues 160–219 (GSRKKLRLSKDQALVLEETFKEHSTLNPKQKLALAKQLNLRARQVEVWFQNRRARTKLKQ) is a DNA-binding region (homeobox). The interval 227 to 248 (LKRCCDNLTEENRRLQKEVSEL) is leucine-zipper.

It belongs to the HD-ZIP homeobox family. Class II subfamily.

The protein resides in the nucleus. Probable transcription factor. The protein is Homeobox-leucine zipper protein ATHB-4 (ATHB-4) of Arabidopsis thaliana (Mouse-ear cress).